We begin with the raw amino-acid sequence, 320 residues long: Cytochrome f (320 aa).

A signal peptide spans 1–35; the sequence is MQTRKTFSWIKEEITRSISVLLMIYIITWASISNA. Positions 36, 56, 59, and 60 each coordinate heme. Residues 286 to 306 traverse the membrane as a helical segment; the sequence is VQGLLFFLASVILAQIFLVLK.

The protein belongs to the cytochrome f family. As to quaternary structure, the 4 large subunits of the cytochrome b6-f complex are cytochrome b6, subunit IV (17 kDa polypeptide, petD), cytochrome f and the Rieske protein, while the 4 small subunits are PetG, PetL, PetM and PetN. The complex functions as a dimer. Heme serves as cofactor.

The protein resides in the plastid. It is found in the chloroplast thylakoid membrane. Component of the cytochrome b6-f complex, which mediates electron transfer between photosystem II (PSII) and photosystem I (PSI), cyclic electron flow around PSI, and state transitions. The protein is Cytochrome f of Manihot esculenta (Cassava).